The sequence spans 543 residues: Protein lin-14 (543 aa).

2 disordered regions span residues 165 to 228 and 268 to 291; these read PNGH…SSNH and APAT…PRKP. The segment covering 177–213 has biased composition (polar residues); sequence SMQTDEQQVKWSSPSSVDSNGQKTDSSAASAGDNQNI. Over residues 268–282 the composition is skewed to low complexity; sequence APATNGTTNGATKAA.

In terms of processing, cleaved by caspase ced-3 in vitro.

Its subcellular location is the nucleus. Heterochronic protein which controls the choice of stage specific cell fates. Involved in the temporal progression of vulval fate patterning, possibly by inhibiting lin-12. Acts as a transcription factor involved in the stage-specific repression of insulin/insulin-like growth factor gene ins-33. This chain is Protein lin-14 (lin-14), found in Caenorhabditis briggsae.